A 283-amino-acid chain; its full sequence is tRNA-cytidine(32) 2-sulfurtransferase (283 aa).

Residues 49–54 carry the PP-loop motif motif; it reads SGGKDS. Positions 124, 127, and 215 each coordinate [4Fe-4S] cluster.

Belongs to the TtcA family. In terms of assembly, homodimer. The cofactor is Mg(2+). [4Fe-4S] cluster is required as a cofactor.

The protein localises to the cytoplasm. The enzyme catalyses cytidine(32) in tRNA + S-sulfanyl-L-cysteinyl-[cysteine desulfurase] + AH2 + ATP = 2-thiocytidine(32) in tRNA + L-cysteinyl-[cysteine desulfurase] + A + AMP + diphosphate + H(+). The protein operates within tRNA modification. In terms of biological role, catalyzes the ATP-dependent 2-thiolation of cytidine in position 32 of tRNA, to form 2-thiocytidine (s(2)C32). The sulfur atoms are provided by the cysteine/cysteine desulfurase (IscS) system. The sequence is that of tRNA-cytidine(32) 2-sulfurtransferase from Acaryochloris marina (strain MBIC 11017).